The following is a 185-amino-acid chain: Ribosome-recycling factor (185 aa).

The protein belongs to the RRF family.

It localises to the cytoplasm. Its function is as follows. Responsible for the release of ribosomes from messenger RNA at the termination of protein biosynthesis. May increase the efficiency of translation by recycling ribosomes from one round of translation to another. This Neisseria gonorrhoeae (strain ATCC 700825 / FA 1090) protein is Ribosome-recycling factor.